A 361-amino-acid chain; its full sequence is Probable mannose-1-phosphate guanylyltransferase 1 (361 aa).

The GDP-alpha-D-mannose site is built by L6 and V7. Residues G9, G11, T12, R13, and K23 each contribute to the diphosphate site. Residues G85, N109, D111, G146, and N173 each contribute to the GDP-alpha-D-mannose site.

It belongs to the transferase hexapeptide repeat family.

The enzyme catalyses alpha-D-mannose 1-phosphate + GTP + H(+) = GDP-alpha-D-mannose + diphosphate. Its pathway is nucleotide-sugar biosynthesis; GDP-alpha-D-mannose biosynthesis; GDP-alpha-D-mannose from alpha-D-mannose 1-phosphate (GTP route): step 1/1. Catalyzes a reaction of the Smirnoff-Wheeler pathway, the major route to ascorbate biosynthesis in plants. The chain is Probable mannose-1-phosphate guanylyltransferase 1 from Oryza sativa subsp. japonica (Rice).